Consider the following 212-residue polypeptide: Glycerol-3-phosphate acyltransferase (212 aa).

A run of 5 helical transmembrane segments spans residues 5–25, 53–73, 80–100, 112–132, and 138–158; these read ALGMIIFAYLCGSISSAILVC, VAAAAVLVFDILKGMLPVWLA, PLYLGLTAIAACLGHIYPVFF, FGAIAPIGWDLTGLMTGTWLL, and GYSSLGAIISALIAPFYVWWF.

This sequence belongs to the PlsY family. As to quaternary structure, probably interacts with PlsX.

It is found in the cell inner membrane. It catalyses the reaction an acyl phosphate + sn-glycerol 3-phosphate = a 1-acyl-sn-glycero-3-phosphate + phosphate. It participates in lipid metabolism; phospholipid metabolism. In terms of biological role, catalyzes the transfer of an acyl group from acyl-phosphate (acyl-PO(4)) to glycerol-3-phosphate (G3P) to form lysophosphatidic acid (LPA). This enzyme utilizes acyl-phosphate as fatty acyl donor, but not acyl-CoA or acyl-ACP. In Serratia proteamaculans (strain 568), this protein is Glycerol-3-phosphate acyltransferase.